A 930-amino-acid chain; its full sequence is MGGSCAQRRRAGPRQVLFPLLLPLFYPTLSEPIRYSIPEELAKGSVVGNLAKDLGLSVLDVSARKLRVSAEKLHFSVDAESGDLLVKNRIDREQICKERRRCELQLEAVVENPLNIFHVIVVIEDVNDHAPQFDKKEIHLEIFESASAGTRLSLDPATDPDININSIKDYKINSNPYFSLMVRVNSDGGKYPELSLEKLLDREEQRSHSLILTALDGGDPPRSATAHIEISVKDTNDNPPVFSRDEYRISLSENLPPGSPVLQVTATDQDEGVNAEINYYFRSTAQSTKHMFSLDEKTGMIKNNQSFDFEDVERYTMEVEAKDGGGLSTQCKVIIEILDENDNSPEIIITSLSDQILENSPPGMVVALFKTRDLDFGGNGEVRCNIETDIPFKIYSSSNNYYKLVTDGALDREQTPEYNVTIVATDRGKPPLSSSRSITLYVADINDNAPVFDQTSYVVHVAENNPPGASIAQVSASDPDLGLNGHISYSIVASDLEPLAVSSYVSVSAQSGVVFAQRAFDHEQLRAFALTLQARDHGSPTLSANVSLRVLVGDRNDNAPRVLYPALGPDGSAFFDMVPRSAEPGYLVTKVVAVDADSGHNAWLSYHVLQASEPGLFSLGLRTGEVRTARALGDRDAARQRLLVAVRDGGQPPLSATATLHLVFADNLQEILPDLSDRPVLSDPQAELQFYLVVALALISVLFLLAVILAIALRLRRSLSPATWDCFHPGLCVKSGPVVPPNYSEGTLPYSYNLCIAHTGTKEFNFLKCSVPLHSNEDMVCSVSPGALIPPHGGEDLTSHPETLTSQAPPNTDWRFSQAQRPGTSGSQNGDDTGTWPNNQFDTEMLQAMILASASEAADGSSTLGGGAGTMGLSARYGPQFTLQHVPDYRQNVYIPGSNATLTNAAGKRDGKAPAGGNGNKKKSGKKEKK.

The signal sequence occupies residues 1 to 30; sequence MGGSCAQRRRAGPRQVLFPLLLPLFYPTLS. 6 consecutive Cadherin domains span residues 31–133, 134–242, 243–347, 348–452, 453–562, and 570–675; these read EPIR…APQF, DKKE…PPVF, SRDE…SPEI, IITS…APVF, DQTS…APRV, and DGSA…LPDL. Residues 31–691 are Extracellular-facing; it reads EPIRYSIPEE…SDPQAELQFY (661 aa). Residues N304, N419, and N545 are each glycosylated (N-linked (GlcNAc...) asparagine). Residues 692–712 traverse the membrane as a helical segment; it reads LVVALALISVLFLLAVILAIA. Topologically, residues 713–930 are cytoplasmic; that stretch reads LRLRRSLSPA…KKKSGKKEKK (218 aa). Disordered stretches follow at residues 791–839 and 900–930; these read PHGG…WPNN and ATLT…KEKK. Over residues 800-839 the composition is skewed to polar residues; sequence HPETLTSQAPPNTDWRFSQAQRPGTSGSQNGDDTGTWPNN. Basic residues predominate over residues 920-930; sequence NKKKSGKKEKK.

The protein localises to the cell membrane. Its function is as follows. Potential calcium-dependent cell-adhesion protein. May be involved in the establishment and maintenance of specific neuronal connections in the brain. This Homo sapiens (Human) protein is Protocadherin gamma-B6 (PCDHGB6).